We begin with the raw amino-acid sequence, 130 residues long: Small ribosomal subunit protein uS9 (130 aa).

Belongs to the universal ribosomal protein uS9 family.

The sequence is that of Small ribosomal subunit protein uS9 from Polaromonas naphthalenivorans (strain CJ2).